Here is a 331-residue protein sequence, read N- to C-terminus: Tryptophan--tRNA ligase (331 aa).

ATP is bound by residues 10 to 12 (QPS) and 18 to 19 (GN). The 'HIGH' region signature appears at 11–19 (PSGQLTLGN). L-tryptophan is bound at residue aspartate 133. Residues 145-147 (GED), valine 184, and 193-197 (KMSKS) contribute to the ATP site. Residues 193 to 197 (KMSKS) carry the 'KMSKS' region motif.

The protein belongs to the class-I aminoacyl-tRNA synthetase family. As to quaternary structure, homodimer.

It is found in the cytoplasm. The catalysed reaction is tRNA(Trp) + L-tryptophan + ATP = L-tryptophyl-tRNA(Trp) + AMP + diphosphate + H(+). Functionally, catalyzes the attachment of tryptophan to tRNA(Trp). The chain is Tryptophan--tRNA ligase from Listeria monocytogenes serotype 4b (strain F2365).